The chain runs to 185 residues: Ribosome-recycling factor (185 aa).

Residues 136–155 (NDDLKKLEKNGDITEDELRA) are disordered.

It belongs to the RRF family.

The protein resides in the cytoplasm. Functionally, responsible for the release of ribosomes from messenger RNA at the termination of protein biosynthesis. May increase the efficiency of translation by recycling ribosomes from one round of translation to another. The sequence is that of Ribosome-recycling factor from Bacillus velezensis (strain DSM 23117 / BGSC 10A6 / LMG 26770 / FZB42) (Bacillus amyloliquefaciens subsp. plantarum).